The primary structure comprises 214 residues: Vascular endothelial growth factor A (214 aa).

Residues 1–26 (MNFLLSWVHWSLALLLYLHHAKWSQA) form the signal peptide. 3 disulfide bridges follow: Cys51–Cys93, Cys82–Cys127, and Cys86–Cys129. N-linked (GlcNAc...) asparagine glycosylation is present at Asn100. Residues 131–142 (PKKDRARQEKKS) are compositionally biased toward basic and acidic residues. The interval 131–162 (PKKDRARQEKKSIRGKGKGQKRKRKKSRYKPW) is disordered. Positions 143–159 (IRGKGKGQKRKRKKSRY) are enriched in basic residues.

This sequence belongs to the PDGF/VEGF growth factor family. In terms of assembly, homodimer; disulfide-linked. Also found as heterodimer with PGF. Interacts with NRP1. Interacts with BSG. Interacts with CD82; this interaction inhibits VEGFA-mediated signaling pathway.

It localises to the secreted. Its function is as follows. Growth factor active in angiogenesis, vasculogenesis and endothelial cell growth. Induces endothelial cell proliferation, promotes cell migration, inhibits apoptosis and induces permeabilization of blood vessels. Binds to the FLT1/VEGFR1 and KDR/VEGFR2 receptors, heparan sulfate and heparin. Binding to NRP1 receptor initiates a signaling pathway needed for motor neuron axon guidance and cell body migration, including for the caudal migration of facial motor neurons from rhombomere 4 to rhombomere 6 during embryonic development. Also binds the DEAR/FBXW7-AS1 receptor. The polypeptide is Vascular endothelial growth factor A (VEGFA) (Canis lupus familiaris (Dog)).